Consider the following 581-residue polypeptide: Spastin (581 aa).

Over residues 1–12 (MSSPAGRRKKKG) the composition is skewed to basic residues. Positions 1-39 (MSSPAGRRKKKGSGGASPAPARPPPPAAVPAPAAGPAPA) are disordered. The tract at residues 1–48 (MSSPAGRRKKKGSGGASPAPARPPPPAAVPAPAAGPAPAPGSPHKRNL) is required for nuclear localization. At 1–54 (MSSPAGRRKKKGSGGASPAPARPPPPAAVPAPAAGPAPAPGSPHKRNLYYFSYP) the chain is on the cytoplasmic side. The tract at residues 1-78 (MSSPAGRRKK…LGLLFVWLCQ (78 aa)) is required for interaction with ATL1. Residues 1-191 (MSSPAGRRKK…LVMAKDRLQL (191 aa)) form a required for midbody localization region. Residues 1–265 (MSSPAGRRKK…GTSKPNRTNK (265 aa)) form a required for interaction with RTN1 region. The Nuclear localization signal signature appears at 4 to 11 (PAGRRKKK). The segment covering 20-39 (PARPPPPAAVPAPAAGPAPA) has biased composition (pro residues). A required for interaction with SSNA1 and microtubules region spans residues 48 to 85 (LYYFSYPLVVGFALLRLLACHLGLLFVWLCQRFSRALM). Residues 55-75 (LVVGFALLRLLACHLGLLFVW) constitute an intramembrane region (helical). Residues 57 to 65 (VGFALLRLL) carry the Nuclear export signal motif. The Cytoplasmic portion of the chain corresponds to 76 to 581 (LCQRFSRALM…WNKDFGDTTV (506 aa)). The segment at 90–111 (SSGTAPAPASPSTPAPGPGGEA) is disordered. The segment covering 97 to 106 (PASPSTPAPG) has biased composition (pro residues). The region spanning 118-192 (HKQAFEYISI…VMAKDRLQLL (75 aa)) is the MIT domain. Residues 193–581 (ESGAVPKKKD…WNKDFGDTTV (389 aa)) are sufficient for microtubule severing. The disordered stretch occupies residues 195–277 (GAVPKKKDPL…TPTTAVRKKK (83 aa)). The segment covering 206-225 (HASNSLPRSKTVMKSGSTGL) has biased composition (polar residues). Phosphoserine is present on residues serine 210 and serine 233. The required for interaction with microtubules and microtubule severing stretch occupies residues 235-293 (SGLSMVSGARPGSGPAATTHKGTSKPNRTNKPSTPTTAVRKKKDLKNFRNVDSNLANLI). Polar residues predominate over residues 254-271 (HKGTSKPNRTNKPSTPTT). Threonine 271 carries the phosphothreonine modification. Positions 274–277 (RKKK) match the Nuclear localization signal motif. 347 to 354 (GPPGNGKT) is a binding site for ATP. Serine 562 is subject to Phosphoserine.

The protein belongs to the AAA ATPase family. Spastin subfamily. In terms of assembly, homohexamer. Mostly monomeric, but assembles into hexameric structure for short periods of time. Oligomerization seems to be a prerequisite for catalytic activity. Binding to ATP in a cleft between two adjacent subunits stabilizes the homohexameric form. Binds to microtubules at least in part via the alpha-tubulin and beta-tubulin tails. The hexamer adopts a ring conformation through which microtubules pass prior to being severed. Does not interact strongly with tubulin heterodimers. Interacts (via MIT domain) with CHMP1B; the interaction is direct. Interacts with SSNA1. Interacts with ATL1. Interacts with RTN1. Interacts with ZFYVE27. Interacts with REEP1. Interacts (via MIT domain) with IST1.

It is found in the membrane. The protein localises to the endoplasmic reticulum. The protein resides in the midbody. Its subcellular location is the cytoplasm. It localises to the cytoskeleton. It is found in the microtubule organizing center. The protein localises to the centrosome. The protein resides in the perinuclear region. Its subcellular location is the nucleus. It localises to the spindle. It is found in the cell projection. The protein localises to the axon. The enzyme catalyses n ATP + n H2O + a microtubule = n ADP + n phosphate + (n+1) alpha/beta tubulin heterodimers.. With respect to regulation, allosteric enzyme with a cooperative mechanism; at least two neighbor subunits influence each other strongly in spastin hexamers. Microtubule binding promotes cooperative interactions among spastin subunits. ATP-dependent microtubule severing protein that specifically recognizes and cuts microtubules that are polyglutamylated. Preferentially recognizes and acts on microtubules decorated with short polyglutamate tails: severing activity increases as the number of glutamates per tubulin rises from one to eight, but decreases beyond this glutamylation threshold. Severing activity is not dependent on tubulin acetylation or detyrosination. Microtubule severing promotes reorganization of cellular microtubule arrays and the release of microtubules from the centrosome following nucleation. It is critical for the biogenesis and maintenance of complex microtubule arrays in axons, spindles and cilia. SPAST is involved in abscission step of cytokinesis and nuclear envelope reassembly during anaphase in cooperation with the ESCRT-III complex. Recruited at the midbody, probably by IST1, and participates in membrane fission during abscission together with the ESCRT-III complex. Recruited to the nuclear membrane by IST1 and mediates microtubule severing, promoting nuclear envelope sealing and mitotic spindle disassembly during late anaphase. Required for membrane traffic from the endoplasmic reticulum (ER) to the Golgi and endosome recycling. Recruited by IST1 to endosomes and regulates early endosomal tubulation and recycling by mediating microtubule severing. Probably plays a role in axon growth and the formation of axonal branches. The polypeptide is Spastin (Rattus norvegicus (Rat)).